Here is an 82-residue protein sequence, read N- to C-terminus: Putative membrane protein insertion efficiency factor (82 aa).

The segment at 63–82 (GGFDPVPLKKDKNSKTTHHH) is disordered.

The protein belongs to the UPF0161 family.

The protein localises to the cell membrane. Could be involved in insertion of integral membrane proteins into the membrane. This Staphylococcus epidermidis (strain ATCC 35984 / DSM 28319 / BCRC 17069 / CCUG 31568 / BM 3577 / RP62A) protein is Putative membrane protein insertion efficiency factor.